The following is a 90-amino-acid chain: Large ribosomal subunit protein bL27 (90 aa).

Residues 1-21 are disordered; it reads MAHTKAGGTTRNSRDSAGRRL.

This sequence belongs to the bacterial ribosomal protein bL27 family.

The sequence is that of Large ribosomal subunit protein bL27 from Metamycoplasma arthritidis (strain 158L3-1) (Mycoplasma arthritidis).